A 151-amino-acid chain; its full sequence is Large ribosomal subunit protein bL9 (151 aa).

Belongs to the bacterial ribosomal protein bL9 family.

In terms of biological role, binds to the 23S rRNA. This Thermosipho africanus (strain TCF52B) protein is Large ribosomal subunit protein bL9.